Consider the following 932-residue polypeptide: UPF0182 protein Dred_1797 (932 aa).

Helical transmembrane passes span 11 to 31 (LVILAGALLFSLIGWGAGLYI), 53 to 73 (IGLRVLVGIIMFLLLLINLML), 118 to 138 (LTLAFTLLSMALGFLYSSSVA), 180 to 200 (ILASAIFLNIVLVALVYLVTD), 209 to 229 (IFRFPSARYHLSVLAALFFVI), 264 to 284 (YKALMILSLVTAIIIIANIFL), and 292 to 312 (YAIGGLLVTSILLGSVYPAII). A disordered region spans residues 861–883 (DRPQQGVPPATDQPAGQQPAPEK).

Belongs to the UPF0182 family.

Its subcellular location is the cell membrane. The sequence is that of UPF0182 protein Dred_1797 from Desulforamulus reducens (strain ATCC BAA-1160 / DSM 100696 / MI-1) (Desulfotomaculum reducens).